The sequence spans 397 residues: Acetate kinase (397 aa).

Asn-8 serves as a coordination point for Mg(2+). Lys-15 is a binding site for ATP. Arg-89 is a binding site for substrate. Catalysis depends on Asp-146, which acts as the Proton donor/acceptor. ATP-binding positions include 206–210 (HLGNG), 281–283 (DLR), and 329–333 (GIGEN). Glu-382 serves as a coordination point for Mg(2+).

This sequence belongs to the acetokinase family. Homodimer. It depends on Mg(2+) as a cofactor. The cofactor is Mn(2+).

The protein localises to the cytoplasm. The catalysed reaction is acetate + ATP = acetyl phosphate + ADP. It participates in metabolic intermediate biosynthesis; acetyl-CoA biosynthesis; acetyl-CoA from acetate: step 1/2. Catalyzes the formation of acetyl phosphate from acetate and ATP. Can also catalyze the reverse reaction. The chain is Acetate kinase from Geobacillus sp. (strain WCH70).